The chain runs to 200 residues: Potassium-transporting ATPase KdpC subunit (200 aa).

The chain crosses the membrane as a helical span at residues 6–26 (PALVLLILLTLITGIAYPLLT).

The protein belongs to the KdpC family. As to quaternary structure, the system is composed of three essential subunits: KdpA, KdpB and KdpC.

The protein resides in the cell inner membrane. Functionally, part of the high-affinity ATP-driven potassium transport (or Kdp) system, which catalyzes the hydrolysis of ATP coupled with the electrogenic transport of potassium into the cytoplasm. This subunit acts as a catalytic chaperone that increases the ATP-binding affinity of the ATP-hydrolyzing subunit KdpB by the formation of a transient KdpB/KdpC/ATP ternary complex. The chain is Potassium-transporting ATPase KdpC subunit from Yersinia pseudotuberculosis serotype O:1b (strain IP 31758).